A 284-amino-acid polypeptide reads, in one-letter code: Diaminopimelate epimerase (284 aa).

Residues asparagine 13 and asparagine 70 each contribute to the substrate site. The active-site Proton donor is cysteine 79. Substrate-binding positions include 80–81 (GN), asparagine 167, asparagine 200, and 218–219 (ER). Cysteine 227 acts as the Proton acceptor in catalysis. 228 to 229 (GT) provides a ligand contact to substrate.

This sequence belongs to the diaminopimelate epimerase family. In terms of assembly, homodimer.

The protein resides in the cytoplasm. It catalyses the reaction (2S,6S)-2,6-diaminopimelate = meso-2,6-diaminopimelate. It functions in the pathway amino-acid biosynthesis; L-lysine biosynthesis via DAP pathway; DL-2,6-diaminopimelate from LL-2,6-diaminopimelate: step 1/1. Its function is as follows. Catalyzes the stereoinversion of LL-2,6-diaminopimelate (L,L-DAP) to meso-diaminopimelate (meso-DAP), a precursor of L-lysine and an essential component of the bacterial peptidoglycan. This Prochlorococcus marinus (strain NATL2A) protein is Diaminopimelate epimerase.